Here is a 425-residue protein sequence, read N- to C-terminus: Serine--tRNA ligase (425 aa).

Residue 231–233 (TAE) participates in L-serine binding. ATP is bound by residues 262 to 264 (RTE) and Val278. Glu285 is an L-serine binding site. ATP is bound at residue 349 to 352 (EVTS). Residue Thr384 participates in L-serine binding.

Belongs to the class-II aminoacyl-tRNA synthetase family. Type-1 seryl-tRNA synthetase subfamily. In terms of assembly, homodimer. The tRNA molecule binds across the dimer.

The protein localises to the cytoplasm. It catalyses the reaction tRNA(Ser) + L-serine + ATP = L-seryl-tRNA(Ser) + AMP + diphosphate + H(+). The enzyme catalyses tRNA(Sec) + L-serine + ATP = L-seryl-tRNA(Sec) + AMP + diphosphate + H(+). Its pathway is aminoacyl-tRNA biosynthesis; selenocysteinyl-tRNA(Sec) biosynthesis; L-seryl-tRNA(Sec) from L-serine and tRNA(Sec): step 1/1. Its function is as follows. Catalyzes the attachment of serine to tRNA(Ser). Is also able to aminoacylate tRNA(Sec) with serine, to form the misacylated tRNA L-seryl-tRNA(Sec), which will be further converted into selenocysteinyl-tRNA(Sec). This chain is Serine--tRNA ligase, found in Dictyoglomus turgidum (strain DSM 6724 / Z-1310).